A 497-amino-acid chain; its full sequence is Protein adenylyltransferase Fic (497 aa).

The interval 1 to 30 is disordered; the sequence is MGATDQALEAESKTTEPPKTPPVPEQHDRP. The chain crosses the membrane as a helical span at residues 38–58; the sequence is LCHLLVLLFSGGLAAITLHIF. 2 TPR repeats span residues 123–156 and 157–191; these read ALGA…APRH and PTVL…SPSN. Residues 248–253 carry the Inhibitory (S/T)XXXE(G/N) motif motif; that stretch reads TVGIEG. ATP contacts are provided by residues Glu252 and 333-336; that span reads VGGH. One can recognise a Fido domain in the interval 302 to 437; sequence ITIKDILELH…IRPFVRFIAD (136 aa). His380 is an active-site residue. ATP contacts are provided by residues 384-391, 416-417, and Asn424; these read DGNGRTSR and YY. The tract at residues 468–497 is disordered; it reads GEGVPQLQSSQMGGGASIPEFHESGSGSLP.

It belongs to the fic family. In terms of assembly, homodimer.

The protein localises to the membrane. The enzyme catalyses L-tyrosyl-[protein] + ATP = O-(5'-adenylyl)-L-tyrosyl-[protein] + diphosphate. It carries out the reaction L-threonyl-[protein] + ATP = 3-O-(5'-adenylyl)-L-threonyl-[protein] + diphosphate. It catalyses the reaction 3-O-(5'-adenylyl)-L-threonyl-[protein] + H2O = L-threonyl-[protein] + AMP + H(+). The side chain of Glu-252 determines which of the two opposing activities (AMPylase or de-AMPylase) will take place. In response to endoplasmic reticulum stress, mediates de-AMPylase activity. Adenylyltransferase activity is inhibited by the inhibitory helix present at the N-terminus: Glu-252 binds ATP and competes with ATP-binding at Arg-391, thereby preventing adenylyltransferase activity. In unstressed cells, disengagement of Glu-252 promotes adenylyltransferase activity. Activation dissociates ATP-binding from Glu-252, allowing ordered binding of the entire ATP moiety with the alpha-phosphate in an orientation that is productive for accepting an incoming target hydroxyl side chain. Functionally, protein that can both mediate the addition of adenosine 5'-monophosphate (AMP) to specific residues of target proteins (AMPylation), and the removal of the same modification from target proteins (de-AMPylation), depending on the context. The side chain of Glu-252 determines which of the two opposing activities (AMPylase or de-AMPylase) will take place. Acts as a key regulator of the unfolded protein response (UPR) by mediating AMPylation or de-AMPylation of Hsc70-3/BiP. In unstressed cells, acts as an adenylyltransferase by mediating AMPylation of Hsc70-3/BiP at 'Thr-518', thereby inactivating it. In response to endoplasmic reticulum stress, acts as a phosphodiesterase by mediating removal of ATP (de-AMPylation) from Hsc70-3/BiP at 'Thr-518', leading to restore HSPA5/BiP activity. The protein is Protein adenylyltransferase Fic of Drosophila ananassae (Fruit fly).